An 86-amino-acid polypeptide reads, in one-letter code: Putative membrane protein insertion efficiency factor (86 aa).

This sequence belongs to the UPF0161 family.

It is found in the cell inner membrane. Its function is as follows. Could be involved in insertion of integral membrane proteins into the membrane. The sequence is that of Putative membrane protein insertion efficiency factor from Mannheimia succiniciproducens (strain KCTC 0769BP / MBEL55E).